A 295-amino-acid polypeptide reads, in one-letter code: UDP-N-acetylenolpyruvoylglucosamine reductase (295 aa).

Positions 26-189 (VGGRADILFK…VEAEFKGVNS (164 aa)) constitute an FAD-binding PCMH-type domain. Residue Arg169 is part of the active site. Catalysis depends on Cys218, which acts as the Proton donor. The active site involves Glu288.

Belongs to the MurB family. Requires FAD as cofactor.

The protein localises to the cytoplasm. The catalysed reaction is UDP-N-acetyl-alpha-D-muramate + NADP(+) = UDP-N-acetyl-3-O-(1-carboxyvinyl)-alpha-D-glucosamine + NADPH + H(+). The protein operates within cell wall biogenesis; peptidoglycan biosynthesis. Functionally, cell wall formation. The polypeptide is UDP-N-acetylenolpyruvoylglucosamine reductase (Wolbachia sp. subsp. Drosophila simulans (strain wRi)).